Consider the following 163-residue polypeptide: Lectin-like protein EP153R (163 aa).

Residues Met1–Ile26 lie on the Cytoplasmic side of the membrane. Residues Leu27–Glu47 traverse the membrane as a helical segment. The Extracellular segment spans residues Ile48–Lys163. A disulfide bond links Cys63 and Cys74. Positions Cys63 to Ser162 are lectin-like. 8 N-linked (GlcNAc...) asparagine; by host glycosylation sites follow: Asn84, Asn96, Asn97, Asn103, Asn109, Asn115, Asn129, and Asn135. Residues Cys92 and Cys161 are joined by a disulfide bond.

It belongs to the asfivirus lectin-like protein family. Homodimer.

The protein resides in the host endoplasmic reticulum membrane. Functionally, down-regulates MHC-I expression by impairing the appropriate configuration or presentation into the plasma membrane of the latter. Participates in viral hemadsorption, which may help viral spread. Reduces the transactivating activity of host TP53, thus inhibiting apoptosis. Non-essential for virus growth in swine macrophage cell cultures. This African swine fever virus (isolate Warthog/Namibia/Wart80/1980) (ASFV) protein is Lectin-like protein EP153R.